The following is a 742-amino-acid chain: Serine/threonine-protein kinase SKY1 (742 aa).

Residues 13–146 (KSAHLADTST…KDYRPGGYHP (134 aa)) form a disordered region. Positions 19–35 (DTSTDASISCEEATSSQ) are enriched in polar residues. Low complexity predominate over residues 56 to 73 (TKSKLSLALQTSKSSSSA). Residues 81–101 (TSSKTEDFSTKSIKKKPDSGV) are compositionally biased toward basic and acidic residues. A compositionally biased stretch (low complexity) spans 106–127 (SIQSDSGPQSDSDLDSDSSISS). A compositionally biased stretch (basic and acidic residues) spans 128–140 (CDERNEESLKDYR). The Protein kinase domain maps to 158-706 (YILVRKLGWG…AGGLVNHPWL (549 aa)). Residues 164–172 (LGWGHFSTV) and Lys-187 each bind ATP. The Proton acceptor role is filled by Asp-294. Residues Thr-383 and Thr-386 each carry the phosphothreonine modification. Phosphoserine occurs at positions 388, 393, 410, 427, 432, 445, 449, and 453. The interval 459-491 (INEDSNDNNNNDNSKNKNNNNNNSNNNNNEDIM) is disordered. The span at 465–489 (DNNNNDNSKNKNNNNNNSNNNNNED) shows a compositional bias: low complexity.

It belongs to the protein kinase superfamily. Ser/Thr protein kinase family.

The catalysed reaction is L-seryl-[protein] + ATP = O-phospho-L-seryl-[protein] + ADP + H(+). It catalyses the reaction L-threonyl-[protein] + ATP = O-phospho-L-threonyl-[protein] + ADP + H(+). In terms of biological role, constitutively active kinase, specifically and sequentially phosphorylates serine/arginine (SR)-type shuttling mRNA binding proteins in their RS dipeptide repeats. The protein is Serine/threonine-protein kinase SKY1 (SKY1) of Saccharomyces cerevisiae (strain ATCC 204508 / S288c) (Baker's yeast).